The following is a 297-amino-acid chain: 2,3,4,5-tetrahydropyridine-2,6-dicarboxylate N-succinyltransferase (297 aa).

Aspartate 148 and glutamate 165 together coordinate Mg(2+). Glutamate 181 acts as the Acyl-anhydride intermediate in catalysis. Succinyl-CoA is bound by residues arginine 183, glycine 198, serine 201, alanine 224, 239–240, glycine 247, lysine 258, and 271–274; these read EA and RRDS.

This sequence belongs to the type 2 tetrahydrodipicolinate N-succinyltransferase family. Homotrimer.

It is found in the cytoplasm. The catalysed reaction is (S)-2,3,4,5-tetrahydrodipicolinate + succinyl-CoA + H2O = (S)-2-succinylamino-6-oxoheptanedioate + CoA. The protein operates within amino-acid biosynthesis; L-lysine biosynthesis via DAP pathway; LL-2,6-diaminopimelate from (S)-tetrahydrodipicolinate (succinylase route): step 1/3. Catalyzes the conversion of the cyclic tetrahydrodipicolinate (THDP) into the acyclic N-succinyl-L-2-amino-6-oxopimelate using succinyl-CoA. In Corynebacterium glutamicum (strain ATCC 13032 / DSM 20300 / JCM 1318 / BCRC 11384 / CCUG 27702 / LMG 3730 / NBRC 12168 / NCIMB 10025 / NRRL B-2784 / 534), this protein is 2,3,4,5-tetrahydropyridine-2,6-dicarboxylate N-succinyltransferase.